The chain runs to 1132 residues: Ubiquitin carboxyl-terminal hydrolase 43 (1132 aa).

A disordered region spans residues 1 to 103; that stretch reads MDPGVGNALG…GARPPGAQGL (103 aa). Positions 17–28 are enriched in basic residues; that stretch reads RPRRRRSLRRLL. 2 stretches are compositionally biased toward low complexity: residues 29 to 44 and 63 to 78; these read NRFL…SGDS and FACA…GSPG. The USP domain maps to 101 to 710; sequence QGLKNHGNTC…GAYILFYQKR (610 aa). The active-site Nucleophile is the C110. H668 acts as the Proton acceptor in catalysis. R746 is subject to Asymmetric dimethylarginine. Disordered stretches follow at residues 839–891, 935–1008, 1024–1044, and 1057–1106; these read RRRP…TGVP, TVMP…RGQG, RTVR…SDRL, and RESP…GEQI. Residues 941–950 show a composition bias toward basic and acidic residues; sequence GDEKPARPEG. Residues 958–967 show a composition bias toward low complexity; the sequence is GSSQVGSQSS. Phosphoserine is present on S970. Residues 994–1006 show a composition bias toward basic and acidic residues; the sequence is AAMEERAPDKDRG.

The protein belongs to the peptidase C19 family.

The catalysed reaction is Thiol-dependent hydrolysis of ester, thioester, amide, peptide and isopeptide bonds formed by the C-terminal Gly of ubiquitin (a 76-residue protein attached to proteins as an intracellular targeting signal).. May recognize and hydrolyze the peptide bond at the C-terminal Gly of ubiquitin. Involved in the processing of poly-ubiquitin precursors as well as that of ubiquitinated proteins. This Mus musculus (Mouse) protein is Ubiquitin carboxyl-terminal hydrolase 43 (Usp43).